The chain runs to 392 residues: Phosphoglycerate kinase (392 aa).

Substrate is bound by residues 21–23 (DLN), arginine 36, 59–62 (HLGR), arginine 114, and arginine 147. ATP is bound by residues lysine 198, glutamate 320, and 346–349 (GGDT).

It belongs to the phosphoglycerate kinase family. Monomer.

The protein localises to the cytoplasm. The catalysed reaction is (2R)-3-phosphoglycerate + ATP = (2R)-3-phospho-glyceroyl phosphate + ADP. It functions in the pathway carbohydrate degradation; glycolysis; pyruvate from D-glyceraldehyde 3-phosphate: step 2/5. This is Phosphoglycerate kinase from Nitrosomonas eutropha (strain DSM 101675 / C91 / Nm57).